The primary structure comprises 604 residues: Ectonucleoside triphosphate diphosphohydrolase 7 (604 aa).

At 1 to 28 the chain is on the cytoplasmic side; it reads MARISFSYLCPASWYFTVPTVSPFLRQR. The helical transmembrane segment at 29–49 threads the bilayer; sequence VAFLGLFFISCLLLLMLIIDF. Residues 50–546 are Vesicular-facing; the sequence is RHWSASLPRD…QAHGSWFRLS (497 aa). E217 acts as the Proton acceptor in catalysis. N330 carries N-linked (GlcNAc...) asparagine glycosylation. The cysteines at positions 448 and 477 are disulfide-linked. A helical transmembrane segment spans residues 547-567; sequence FVYNHYLFFACILVVLLAIVL. Topologically, residues 568 to 604 are cytoplasmic; that stretch reads YLLRLRRIHHRQTRASAPLDLLWLEEVVPMMGVQVGP.

Belongs to the GDA1/CD39 NTPase family. Ca(2+) serves as cofactor. Requires Mg(2+) as cofactor.

Its subcellular location is the cytoplasmic vesicle membrane. The catalysed reaction is a ribonucleoside 5'-triphosphate + H2O = a ribonucleoside 5'-diphosphate + phosphate + H(+). It catalyses the reaction UTP + H2O = UDP + phosphate + H(+). The enzyme catalyses GTP + H2O = GDP + phosphate + H(+). It carries out the reaction CTP + H2O = CDP + phosphate + H(+). Catalyzes the hydrolysis of nucleoside triphosphates and diphosphates in a calcium- or magnesium-dependent manner. Preferentially hydrolyzes nucleoside 5'-triphosphates, with substrate preference for UTP &gt; GTP &gt; CTP. Hydrolyzes ATP and nucleoside diphosphates only to a minor extent. The protein is Ectonucleoside triphosphate diphosphohydrolase 7 (ENTPD7) of Pongo abelii (Sumatran orangutan).